A 311-amino-acid polypeptide reads, in one-letter code: MDFKHVSVLLEECIENLNIKENGIYVDGTLGGAGHSSEIAKRLSDKGLLIGIDQDENAIKAAGEKLTPMKERIKLVRDNFSNIDAILQNLEIDGIDGILLDLGVSSHQLDEADRGFSYMHDAPLDMRMDTRQAVSAMEVVNSYTEKDLENIIKNYGEEKWAKRIANFIVDFRKEEPITTTHQLVDVIKRAIPKGARIDGPHPAKRTFQAIRIEVNGELEIINKTIDDAVRNLNPGGRICIITFHSLEDRIVKNAFRDLSNPCICPPEFPICRCDRKPAVKIITRKPIVPTEEELELNPRARSAKLRVAEKI.

Residues 33-35, Asp53, Phe80, Asp101, and Gln108 contribute to the S-adenosyl-L-methionine site; that span reads AGH.

Belongs to the methyltransferase superfamily. RsmH family.

Its subcellular location is the cytoplasm. The catalysed reaction is cytidine(1402) in 16S rRNA + S-adenosyl-L-methionine = N(4)-methylcytidine(1402) in 16S rRNA + S-adenosyl-L-homocysteine + H(+). Functionally, specifically methylates the N4 position of cytidine in position 1402 (C1402) of 16S rRNA. The sequence is that of Ribosomal RNA small subunit methyltransferase H from Alkaliphilus oremlandii (strain OhILAs) (Clostridium oremlandii (strain OhILAs)).